Reading from the N-terminus, the 273-residue chain is Cell division protein FtsQ (273 aa).

Topologically, residues 1–20 (MPPRKAHTTRRTPAKKSGVR) are cytoplasmic. A helical transmembrane segment spans residues 21-43 (RRLLRLLVTGVPVLALCGVAWLW). Over 44–273 (LESVRLTRIE…STQKSAMGHE (230 aa)) the chain is Periplasmic. A POTRA domain is found at 47 to 115 (VRLTRIEIVG…GTLRIAVEER (69 aa)).

The protein belongs to the FtsQ/DivIB family. FtsQ subfamily.

The protein resides in the cell inner membrane. Its function is as follows. Essential cell division protein. The protein is Cell division protein FtsQ of Rhodothermus marinus (strain ATCC 43812 / DSM 4252 / R-10) (Rhodothermus obamensis).